The sequence spans 423 residues: Galactosylceramide sulfotransferase (423 aa).

The Cytoplasmic portion of the chain corresponds to 1–12 (MTLLPKKPCKSK). Residues 13–35 (AKGLLLGALFTSFLLLLYSYVVP) traverse the membrane as a helical; Signal-anchor for type II membrane protein segment. The Lumenal segment spans residues 36–423 (PLYPNMAFTT…WKFLRDFLRW (388 aa)). 2 N-linked (GlcNAc...) asparagine glycosylation sites follow: N66 and N312.

Belongs to the galactose-3-O-sulfotransferase family. Expressed in brain, testis, kidney, stomach, small intestine, liver, and lung. Not detected in heart, skeletal muscle, and spleen.

The protein localises to the golgi apparatus membrane. The catalysed reaction is a beta-D-galactosyl-(1&lt;-&gt;1')-N-acylsphing-4-enine + 3'-phosphoadenylyl sulfate = an N-acyl-1-beta-D-(3-O-sulfo)-galactosyl-sphing-4-enine + adenosine 3',5'-bisphosphate + H(+). The enzyme catalyses a 1-O-alkyl-2-acyl-3-O-(beta-D-galactosyl)-sn-glycerol + 3'-phosphoadenylyl sulfate = a 1-O-alkyl-2-acyl-3-(beta-D-3-sulfogalactosyl)-sn-glycerol + adenosine 3',5'-bisphosphate + H(+). It carries out the reaction a beta-D-Gal-(1&lt;-&gt;1')-ceramide + 3'-phosphoadenylyl sulfate = 1-(3-O-sulfo-beta-D-galactosyl)-ceramide + adenosine 3',5'-bisphosphate + H(+). It catalyses the reaction a 1,2-diacyl-3-O-(beta-D-galactosyl)-sn-glycerol + 3'-phosphoadenylyl sulfate = 1,2-diacyl-3-(3-O-sulfo-beta-D-galactosyl)-sn-glycerol + adenosine 3',5'-bisphosphate + H(+). The catalysed reaction is a beta-D-Gal-(1-&gt;4)-beta-D-Glc-(1&lt;-&gt;1)-Cer(d18:1(4E)) + 3'-phosphoadenylyl sulfate = beta-D-3-sulfogalactosyl-(1-&gt;4)-beta-D-glucosyl-(1&lt;-&gt;1')-N-acylsphing-4-enine + adenosine 3',5'-bisphosphate + H(+). It participates in lipid metabolism; sphingolipid metabolism. Functionally, catalyzes the transfer of a sulfate group to position 3 of non-reducing beta-galactosyl residues in glycerolipids and sphingolipids, therefore participates in the biosynthesis of sulfoglycolipids. Catalyzes the synthesis of galactosylceramide sulfate (sulfatide), a major lipid component of the myelin sheath and of monogalactosylalkylacylglycerol sulfate (seminolipid), present in spermatocytes. Seems to prefer beta-glycosides at the non-reducing termini of sugar chains attached to a lipid moiety. Also acts on lactosylceramide, galactosyl 1-alkyl-2-sn-glycerol and galactosyl diacylglycerol (in vitro). This is Galactosylceramide sulfotransferase from Mus musculus (Mouse).